The sequence spans 207 residues: Protein GET1 (207 aa).

Over 1–4 the chain is Lumenal; that stretch reads MPSL. The chain crosses the membrane as a helical span at residues 5 to 24; sequence LISVLFLHIAIYIINTIGAS. At 25 to 110 the chain is on the cytoplasmic side; sequence TIDSLLWLIY…LFDVAVKALR (86 aa). Positions 44–97 form a coiled coil; that stretch reads MAREQHQMKLEVVQLKREMNATSSQDEFAKWAKLRRRHDKALEEYEVKNKQFSR. A helical transmembrane segment spans residues 111–131; sequence WAGTSGLILLLQFWFSKTPIF. The Lumenal portion of the chain corresponds to 132–155; it reads TLPPSWIPWQVEWVLSFPRAPMGT. A helical transmembrane segment spans residues 156-172; sequence VSIQVWGGACAVMVALV. Topologically, residues 173 to 207 are cytoplasmic; that stretch reads GEAIGATVRYLYGSKDSMEAIKVGAGAVEKEKKRQ.

This sequence belongs to the WRB/GET1 family. In terms of assembly, interacts with GET3.

Its subcellular location is the endoplasmic reticulum membrane. Functionally, required for the post-translational delivery of tail-anchored (TA) proteins to the endoplasmic reticulum. Acts as a membrane receptor for soluble GET3, which recognizes and selectively binds the transmembrane domain of TA proteins in the cytosol. The sequence is that of Protein GET1 from Paracoccidioides lutzii (strain ATCC MYA-826 / Pb01) (Paracoccidioides brasiliensis).